The primary structure comprises 373 residues: Superinfection exclusion protein (373 aa).

The first 15 residues, 1 to 15 (MIVLLILSLACTAFT), serve as a signal peptide directing secretion.

This sequence belongs to the serpin family. Orthopoxvirus OPG040 subfamily. In terms of assembly, interacts with A56 protein.

It is found in the virion membrane. Its subcellular location is the host cell membrane. Its function is as follows. Prevents cell to cell fusion via its interaction with A56 protein. The A56-K2 complex associates with components of the entry fusion complex (EFC) presumably to avoid superinfection and syncytium formation. This is Superinfection exclusion protein (OPG040) from Homo sapiens (Human).